The chain runs to 737 residues: 1,4-alpha-glucan branching enzyme GlgB (737 aa).

The active-site Nucleophile is Asp419. The active-site Proton donor is Glu472.

The protein belongs to the glycosyl hydrolase 13 family. GlgB subfamily. As to quaternary structure, monomer.

It carries out the reaction Transfers a segment of a (1-&gt;4)-alpha-D-glucan chain to a primary hydroxy group in a similar glucan chain.. The protein operates within glycan biosynthesis; glycogen biosynthesis. Its function is as follows. Catalyzes the formation of the alpha-1,6-glucosidic linkages in glycogen by scission of a 1,4-alpha-linked oligosaccharide from growing alpha-1,4-glucan chains and the subsequent attachment of the oligosaccharide to the alpha-1,6 position. This is 1,4-alpha-glucan branching enzyme GlgB from Mesorhizobium japonicum (strain LMG 29417 / CECT 9101 / MAFF 303099) (Mesorhizobium loti (strain MAFF 303099)).